Consider the following 923-residue polypeptide: Probable dipeptidyl-aminopeptidase B (923 aa).

Positions 1-16 (MATEKGHGRDDEERVP) are enriched in basic and acidic residues. The interval 1 to 21 (MATEKGHGRDDEERVPLTRGS) is disordered. Residues 1-99 (MATEKGHGRD…KPMHKSVKIA (99 aa)) are Cytoplasmic-facing. Residues 100–120 (LWTLLFLSLGGWSLAFVLFIF) traverse the membrane as a helical; Signal-anchor for type II membrane protein segment. The Vacuolar segment spans residues 121 to 923 (RSHDTYETPI…GLSYNFKHLH (803 aa)). Residues Asn135, Asn351, and Asn574 are each glycosylated (N-linked (GlcNAc...) asparagine). The active-site Charge relay system is Ser756. An N-linked (GlcNAc...) asparagine glycan is attached at Asn815. Catalysis depends on charge relay system residues Asp833 and His866. The N-linked (GlcNAc...) asparagine glycan is linked to Asn902.

Belongs to the peptidase S9B family.

The protein resides in the vacuole membrane. The enzyme catalyses Release of an N-terminal dipeptide, Xaa-Yaa-|-Zaa-, from a polypeptide, preferentially when Yaa is Pro, provided Zaa is neither Pro nor hydroxyproline.. Its function is as follows. Type IV dipeptidyl-peptidase which removes N-terminal dipeptides sequentially from polypeptides having unsubstituted N-termini provided that the penultimate residue is proline. The sequence is that of Probable dipeptidyl-aminopeptidase B (DAPB) from Ajellomyces capsulatus (strain G186AR / H82 / ATCC MYA-2454 / RMSCC 2432) (Darling's disease fungus).